The primary structure comprises 307 residues: Pantothenate kinase (307 aa).

90–97 contributes to the ATP binding site; that stretch reads GSVAVGKS.

This sequence belongs to the prokaryotic pantothenate kinase family.

It is found in the cytoplasm. The catalysed reaction is (R)-pantothenate + ATP = (R)-4'-phosphopantothenate + ADP + H(+). The protein operates within cofactor biosynthesis; coenzyme A biosynthesis; CoA from (R)-pantothenate: step 1/5. The protein is Pantothenate kinase of Limosilactobacillus fermentum (strain NBRC 3956 / LMG 18251) (Lactobacillus fermentum).